A 1486-amino-acid polypeptide reads, in one-letter code: Chromosome partition protein MukB (1486 aa).

34–41 (GGNGAGKS) is an ATP binding site. Coiled coils occupy residues 326 to 418 (LEAD…QYNQ), 444 to 480 (LETF…QAYQ), and 509 to 603 (RHLA…RAPV). The segment at 666 to 783 (PGGSEDQRLN…EVPLFGRAAR (118 aa)) is flexible hinge. 3 coiled-coil regions span residues 835-923 (EAEI…AKLE), 977-1115 (EMLS…TAKA), and 1209-1266 (VEAI…QNVS).

This sequence belongs to the SMC family. MukB subfamily. In terms of assembly, homodimerization via its hinge domain. Binds to DNA via its C-terminal region. Interacts, and probably forms a ternary complex, with MukE and MukF via its C-terminal region. The complex formation is stimulated by calcium or magnesium. Interacts with tubulin-related protein FtsZ.

The protein localises to the cytoplasm. It localises to the nucleoid. In terms of biological role, plays a central role in chromosome condensation, segregation and cell cycle progression. Functions as a homodimer, which is essential for chromosome partition. Involved in negative DNA supercoiling in vivo, and by this means organize and compact chromosomes. May achieve or facilitate chromosome segregation by condensation DNA from both sides of a centrally located replisome during cell division. The protein is Chromosome partition protein MukB of Escherichia coli O9:H4 (strain HS).